A 325-amino-acid chain; its full sequence is Phospholipid phosphatase-related protein type 1 (325 aa).

A glycan (N-linked (GlcNAc...) asparagine) is linked at Asn-5. 3 consecutive transmembrane segments (helical) span residues 13-33, 67-87, and 127-147; these read IIPCFIFVELVIMAGTVLLAY, FITPLVLYCVLAATPTAIIFI, and FTGVFAFGLFATDIFVNAGQV. N-linked (GlcNAc...) asparagine glycosylation occurs at Asn-163. 3 helical membrane passes run 201–218, 230–247, and 257–277; these read AALSIYSALYATMYITST, VLCLGTLCTAFLTGLNRV, and VIAGFILGTAVALFLGMCVVH. Position 307 is a phosphoserine (Ser-307). Asn-316 carries an N-linked (GlcNAc...) asparagine glycan.

Belongs to the PA-phosphatase related phosphoesterase family.

Its subcellular location is the cell membrane. It is found in the cell projection. It localises to the neuron projection. Functionally, may play a role in neurite outgrowth and neurogenesis. The chain is Phospholipid phosphatase-related protein type 1 from Homo sapiens (Human).